The sequence spans 412 residues: Tryptophan synthase beta chain 1 (412 aa).

An N6-(pyridoxal phosphate)lysine modification is found at lysine 103.

Belongs to the TrpB family. In terms of assembly, tetramer of two alpha and two beta chains. It depends on pyridoxal 5'-phosphate as a cofactor.

The enzyme catalyses (1S,2R)-1-C-(indol-3-yl)glycerol 3-phosphate + L-serine = D-glyceraldehyde 3-phosphate + L-tryptophan + H2O. Its pathway is amino-acid biosynthesis; L-tryptophan biosynthesis; L-tryptophan from chorismate: step 5/5. Its function is as follows. The beta subunit is responsible for the synthesis of L-tryptophan from indole and L-serine. The chain is Tryptophan synthase beta chain 1 (trpB1) from Chlamydia caviae (strain ATCC VR-813 / DSM 19441 / 03DC25 / GPIC) (Chlamydophila caviae).